The sequence spans 301 residues: Uricase (301 aa).

Active-site charge relay system residues include K11 and T58. Residues T58, D59, F160, R177, V228, Q229, and N255 each coordinate urate. The active-site Charge relay system is the H257. The Microbody targeting signal motif lies at 299 to 301 (AKL).

It belongs to the uricase family.

Its subcellular location is the peroxisome. The enzyme catalyses urate + O2 + H2O = 5-hydroxyisourate + H2O2. The protein operates within purine metabolism; urate degradation; (S)-allantoin from urate: step 1/3. Its function is as follows. Catalyzes the oxidation of uric acid to 5-hydroxyisourate, which is further processed to form (S)-allantoin. The chain is Uricase (uaZ) from Emericella nidulans (strain FGSC A4 / ATCC 38163 / CBS 112.46 / NRRL 194 / M139) (Aspergillus nidulans).